The sequence spans 220 residues: UPF0319 protein YccT (220 aa).

Residues 1–20 (MKTGALTTFLALCLPVTVFA) form the signal peptide.

Belongs to the UPF0319 family.

In Salmonella dublin (strain CT_02021853), this protein is UPF0319 protein YccT.